We begin with the raw amino-acid sequence, 373 residues long: Flagellar P-ring protein (373 aa).

Residues 1-26 (MKLFFRFVTLVAVLAMSLANVAPAWA) form the signal peptide.

Belongs to the FlgI family. As to quaternary structure, the basal body constitutes a major portion of the flagellar organelle and consists of four rings (L,P,S, and M) mounted on a central rod.

It localises to the periplasm. It is found in the bacterial flagellum basal body. Assembles around the rod to form the L-ring and probably protects the motor/basal body from shearing forces during rotation. In Rhizobium johnstonii (strain DSM 114642 / LMG 32736 / 3841) (Rhizobium leguminosarum bv. viciae), this protein is Flagellar P-ring protein.